The sequence spans 191 residues: Small ribosomal subunit protein uS5 (191 aa).

Positions methionine 1 to aspartate 20 are disordered. The region spanning phenylalanine 23–valine 86 is the S5 DRBM domain.

The protein belongs to the universal ribosomal protein uS5 family. Part of the 30S ribosomal subunit. Contacts proteins S4 and S8.

With S4 and S12 plays an important role in translational accuracy. Functionally, located at the back of the 30S subunit body where it stabilizes the conformation of the head with respect to the body. This is Small ribosomal subunit protein uS5 from Nitrobacter winogradskyi (strain ATCC 25391 / DSM 10237 / CIP 104748 / NCIMB 11846 / Nb-255).